We begin with the raw amino-acid sequence, 377 residues long: MTTSLFTQIRRDLHQIPEPGFAEVKTQQYLLDYLKKLPQERIEIKTWRTGILVKLAGTKPKRLIAWRTDMDGLPIVEETSYPFRSLHEGYMHACGHDMHMAIALGLLTHFTEHSIADDLLFLFQPAEEGPGGAWPMMESEEFAEWRPDCIFALHIAPEYPVGQIATKPGILFANTSELYIDLVGKGGHAAFPHKANDMVVAGSHLVTQLQSIISRNIDPLDSAVVTIGKLESGTKQNIIAEKSRLEGTIRTFSMESMALVKSRIESLVKGVEIGFDCQATIDYGVGYCQVYNEEQLTTDFMQWVQEQCDDVTLITCKEAMTGEDFGYFLKEIPGFLFWLGVQTPYGLHHSKIEPNEDAIEVAIRLVSRYFTWLSQQE.

Asp69 is an active-site residue. Glu128 functions as the Proton acceptor in the catalytic mechanism.

This sequence belongs to the peptidase M20A family. N-acetyldiaminopimelate deacetylase subfamily.

The enzyme catalyses N-acetyl-(2S,6S)-2,6-diaminopimelate + H2O = (2S,6S)-2,6-diaminopimelate + acetate. Its pathway is amino-acid biosynthesis; L-lysine biosynthesis via DAP pathway; LL-2,6-diaminopimelate from (S)-tetrahydrodipicolinate (acetylase route): step 3/3. Functionally, catalyzes the conversion of N-acetyl-diaminopimelate to diaminopimelate and acetate. The sequence is that of N-acetyldiaminopimelate deacetylase from Brevibacillus brevis (strain 47 / JCM 6285 / NBRC 100599).